The sequence spans 653 residues: DNA-directed RNA polymerase III subunit RPC-3 (653 aa).

3 disordered regions span residues 141–186, 280–309, and 422–442; these read INGV…DSDP, DSSAPRKRLKLDGPLEDDVKDEDDGDDFSD, and IKEDEDDEDEEGGPVSMKRRG. Basic and acidic residues predominate over residues 159 to 170; that stretch reads AENHTDHAHDYQ. Composition is skewed to acidic residues over residues 293–309 and 424–433; these read PLEDDVKDEDDGDDFSD and EDEDDEDEEG. Positions 580–601 are leucine-zipper; sequence TYKSMSRCLQRIRVEREKLKFL.

The protein belongs to the RNA polymerase beta chain family. Component of the RNA polymerase III (Pol III) complex consisting of 17 subunits.

Its subcellular location is the nucleus. Its function is as follows. DNA-dependent RNA polymerase catalyzes the transcription of DNA into RNA using the four ribonucleoside triphosphates as substrates. Specific core component of RNA polymerase III which synthesizes small RNAs, such as 5S rRNA and tRNAs. The polypeptide is DNA-directed RNA polymerase III subunit RPC-3 (RPC-82) (Coccidioides immitis (strain RS) (Valley fever fungus)).